The following is a 549-amino-acid chain: Manganese transporter SMF2 (549 aa).

The interval 1–23 is disordered; sequence MTSQEYEPIQWSDESQTNNDSVN. The span at 12–22 shows a compositional bias: polar residues; the sequence is SDESQTNNDSV. The next 8 membrane-spanning stretches (helical) occupy residues 91-109, 130-147, 161-185, 196-214, 312-332, 350-372, 432-452, and 521-541; these read LLFSVLVSNFMAAFWQYLC, FGLNITLYILAEMAIIAT, ILFHIPLALGVILTVVDVLIVLLAY, IFEAFVSLLVVLTVVCFTV, LLISLFTVALFVNCAILIVSG, IYNLLCSTLSKGAGTVFVLALLF, ASQVVLSLLLPFVSAPLLYFT, and VLAIIVWLIISGLNFYMLLGF.

It belongs to the NRAMP family.

The protein resides in the vacuole lumen. It localises to the vesicle. It is found in the cell membrane. The catalysed reaction is Mn(2+)(in) = Mn(2+)(out). In terms of biological role, high-affinity manganese transporter involved in manganese uptake from the extracellular environment. The sequence is that of Manganese transporter SMF2 (SMF2) from Saccharomyces cerevisiae (strain ATCC 204508 / S288c) (Baker's yeast).